A 321-amino-acid chain; its full sequence is L-carnitine dehydrogenase (321 aa).

7–12 (GTGVIG) is an NAD(+) binding site.

It belongs to the 3-hydroxyacyl-CoA dehydrogenase family. L-carnitine dehydrogenase subfamily. In terms of assembly, homodimer.

It is found in the cytoplasm. The enzyme catalyses carnitine + NAD(+) = 3-dehydrocarnitine + NADH + H(+). Its pathway is amine and polyamine metabolism; carnitine metabolism. In terms of biological role, catalyzes the NAD(+)-dependent oxidation of L-carnitine to 3-dehydrocarnitine. This chain is L-carnitine dehydrogenase, found in Staphylococcus epidermidis (strain ATCC 12228 / FDA PCI 1200).